The sequence spans 350 residues: tRNA pseudouridine synthase D (350 aa).

Residue phenylalanine 27 coordinates substrate. The active-site Nucleophile is the aspartate 80. Asparagine 129 serves as a coordination point for substrate. The 149-residue stretch at 155–303 (GVPNYFGVQR…VDTTRRAINL (149 aa)) folds into the TRUD domain. Phenylalanine 329 contacts substrate.

The protein belongs to the pseudouridine synthase TruD family.

The enzyme catalyses uridine(13) in tRNA = pseudouridine(13) in tRNA. Responsible for synthesis of pseudouridine from uracil-13 in transfer RNAs. This chain is tRNA pseudouridine synthase D, found in Proteus mirabilis (strain HI4320).